The primary structure comprises 411 residues: MADFFNLKARQQAAAQASSSKTPTSKQESNRLQPWVEKYRPKTLSEVTAQDNTIQILSRTLQSSNLPHMLFYGPPGTGKTSTILALAKQLYGPELMKSRVLELNASDERGISIVRQKVKDFARQQLSVAPTYNVMTEDKDGGEAKMVRYRDKYSCPPFKIIVLDEADSMTQDAQSALRRTMETYSRMTRFCLVCNYVTRIIDPLASRCSKFRFKSLDQGNAVRRVDDIAKLEDVKLDAGVSEELVRVADGDLRKAITFLQSAARLVGATQTAGRKKKVVVDDEDEMDIDPPSAPSKTTISLEQIAEIAGVIPAPTLASFSDALFPKSAAKSIRYNEIAKVVENMIAEGWSASQTVSQLYEQVMFDERVEDIKKVRLAGVFSETDKRLVDGGDEHLAVLDLGVRVAGVLCMG.

A disordered region spans residues 1–36 (MADFFNLKARQQAAAQASSSKTPTSKQESNRLQPWV). Low complexity predominate over residues 11 to 27 (QQAAAQASSSKTPTSKQ). ATP-binding positions include Val36, Arg40, 73 to 81 (GPPGTGKTS), Asn195, and Arg253.

This sequence belongs to the activator 1 small subunits family. In terms of assembly, heteropentamer of subunits RFC1, RFC2, RFC3, RFC4 and RFC5 that forms a complex with PCNA in the presence of ATP.

It localises to the nucleus. Functionally, the elongation of primed DNA templates by DNA polymerase delta and epsilon requires the action of the accessory proteins proliferating cell nuclear antigen (PCNA) and activator 1. Subunit 2 binds ATP and single-stranded DNA. The polypeptide is Replication factor C subunit 2 (RFC2) (Phaeosphaeria nodorum (strain SN15 / ATCC MYA-4574 / FGSC 10173) (Glume blotch fungus)).